A 68-amino-acid polypeptide reads, in one-letter code: C-hordein (68 aa).

Pro residues-rich tracts occupy residues 1 to 24 (YPQQPQPFPQQPIPQQPQPYPQQP) and 33 to 55 (PQQPQPYPQQPQPFPQQPIPLQP). The disordered stretch occupies residues 1–68 (YPQQPQPFPQ…YTQQTIWSMV (68 aa)). Residues 59 to 68 (YTQQTIWSMV) show a composition bias toward polar residues.

As to expression, developing endosperm.

Sulfur-poor seed storage protein. The protein is C-hordein of Hordeum vulgare (Barley).